A 311-amino-acid chain; its full sequence is Nod factor export ATP-binding protein I (311 aa).

The region spanning 13-243 (IDLAGVSKSY…QIGCPVIEIY (231 aa)) is the ABC transporter domain. 45 to 52 (GPNGAGKS) provides a ligand contact to ATP.

It belongs to the ABC transporter superfamily. Lipooligosaccharide exporter (TC 3.A.1.102) family. The complex is composed of two ATP-binding proteins (NodI) and two transmembrane proteins (NodJ).

The protein localises to the cell inner membrane. In terms of biological role, part of the ABC transporter complex NodIJ involved in the export of the nodulation factors (Nod factors), the bacterial signal molecules that induce symbiosis and subsequent nodulation induction. Nod factors are LCO (lipo-chitin oligosaccharide), a modified beta-1,4-linked N-acetylglucosamine oligosaccharide. This subunit is responsible for energy coupling to the transport system. The chain is Nod factor export ATP-binding protein I from Rhizobium johnstonii (strain DSM 114642 / LMG 32736 / 3841) (Rhizobium leguminosarum bv. viciae).